Reading from the N-terminus, the 517-residue chain is DNA-binding protein (517 aa).

The span at 1–10 (MASRGGNQSS) shows a compositional bias: polar residues. The interval 1–110 (MASRGGNQSS…DISQDSEEER (110 aa)) is disordered. A compositionally biased stretch (low complexity) spans 64–80 (VLVSETSRSSLSPERSN). Over residues 87-96 (PKKKPRKTKH) the composition is skewed to basic residues. Y180 bears the Phosphotyrosine; by host mark. Zn(2+)-binding residues include C269 and H271. A flexible loop region spans residues 282 to 316 (IEMDVASENGQRAMKENPDRAKITQNRWGRNVVQL). Zn(2+) is bound by residues C324, C340, C382, C384, C436, and C453. A C-terminal arm, DBP binding region spans residues 501 to 517 (VSLPAGHYDSRQNPFDF).

Belongs to the adenoviridae E2A DNA-binding protein family. In terms of assembly, homomultimerizes on viral ssDNA bound to pTP. Forms a initiation complex with viral polymerase, pTP and hosts NFIA and POU2F1/OCT1. Interacts with host SRCAP.

The protein localises to the host nucleus. Functionally, plays a role in the elongation phase of viral strand displacement replication by unwinding the template in an ATP-independent fashion, employing its capacity to form multimers. Also enhances the rate of initiation. Released from template upon second strand synthesis. Assembles in complex with viral pTP, viral pol, host NFIA and host POU2F1/OCT1 on viral origin of replication. Covers the whole ssDNA genome during synthesis. The complementary strand synthesis induces its relese from DNA template. May inhibit cellular transcription mediated by the interaction between host SRCAP and CBP. The protein is DNA-binding protein of Human adenovirus B serotype 7 (HAdV-7).